An 874-amino-acid polypeptide reads, in one-letter code: Adhesion G-protein coupled receptor D1 (874 aa).

An N-terminal signal peptide occupies residues 1–25 (MEKLLRLCCWYSWLLLFYYNFQVRG). Over 26 to 567 (VYSRSQDHPG…LARGHQVALS (542 aa)) the chain is Extracellular. Residues 79–276 (KGVTLLYYGR…ASPVMPTDAY (198 aa)) form the Pentraxin (PTX) domain. Asparagine 90, asparagine 185, asparagine 282, asparagine 302, asparagine 319, asparagine 394, asparagine 476, asparagine 501, and asparagine 533 each carry an N-linked (GlcNAc...) asparagine glycan. Residues 371 to 557 (QVTVEGSSAM…AILMQVVPLE (187 aa)) enclose the GAIN-B domain. 2 disulfides stabilise this stretch: cysteine 510–cysteine 539 and cysteine 527–cysteine 541. The GPS stretch occupies residues 510-557 (CAFLDFSSGEGVWSNHGCALTRGNLTYSVCRCTHLTNFAILMQVVPLE). The interval 546–554 (NFAILMQVV) is stachel. Glutamine 563 provides a ligand contact to 17beta-hydroxy-5alpha-androstan-3-one. Residues 568–590 (SISYVGCSLSVLCLVATLVTFAV) form a helical membrane-spanning segment. Residues 591 to 601 (LSSVSTIRNQR) lie on the Cytoplasmic side of the membrane. A helical transmembrane segment spans residues 602–623 (YHIHANLSFAVLVAQVLLLISF). Over 624 to 632 (RLEPGTTPC) the chain is Extracellular. Residues cysteine 632 and cysteine 704 are joined by a disulfide bond. The chain crosses the membrane as a helical span at residues 633-655 (QVMAVLLHYFFLSAFAWMLVEGL). Residues 656–673 (HLYSMVIKVFGSEDSKHR) are Cytoplasmic-facing. Residues 674–695 (YYYGMGWGFPLLICIISLSFAM) traverse the membrane as a helical segment. At 696–710 (DSYGTSNNCWLSLAS) the chain is on the extracellular side. The helical transmembrane segment at 711 to 732 (GAIWAFVAPALFVIVVNIGILI) threads the bilayer. Residues 733 to 757 (AVTRVISQISADNYKIHGDPSAFKL) lie on the Cytoplasmic side of the membrane. Residues 758 to 780 (TAKAVAVLLPILGTSWVFGVLAV) traverse the membrane as a helical segment. At 781–783 (NGC) the chain is on the extracellular side. A helical membrane pass occupies residues 784–810 (AVVFQYMFATLNSLQGLFIFLFHCLLN). Position 795 (asparagine 795) interacts with 17beta-hydroxy-5alpha-androstan-3-one. The Cytoplasmic portion of the chain corresponds to 811-874 (SEVRAAFKHK…SAHRVDLSAV (64 aa)). The segment at 854 to 874 (TKLSPWDKSSHSAHRVDLSAV) is disordered. Residues 861–874 (KSSHSAHRVDLSAV) are compositionally biased toward basic and acidic residues.

Belongs to the G-protein coupled receptor 2 family. Adhesion G-protein coupled receptor (ADGR) subfamily. Heterodimer of 2 chains generated by proteolytic processing; the large extracellular N-terminal fragment and the membrane-bound C-terminal fragment predominantly remain associated and non-covalently linked. Interacts with ESYT1; interaction takes place in absence of cytosolic calcium and inhibits the G protein-coupled receptor activity of ADGRD1. In terms of processing, autoproteolytically processed at the GPS region of the GAIN-B domain; this cleavage modulates receptor activity. Cleavage takes place early in the secretory pathway before N-glycosylation. In terms of tissue distribution, up-regulated in CD133(+) cell population of glioblastoma.

The protein localises to the cell membrane. Forms a heterodimer of 2 chains generated by proteolytic processing that remain associated through non-covalent interactions mediated by the GAIN-B domain. In the inactivated receptor, the Stachel sequence (also named stalk) is embedded in the GAIN-B domain, where it adopts a beta-strand conformation. On activation, the Stachel moves into the 7 transmembrane region and adopts a twisted hook-shaped configuration that forms contacts within the receptor, leading to coupling of a G-alpha protein, which activates signaling. The cleaved GAIN-B and N-terminal domains can then dissociate from the rest of the receptor. Interaction with ESYT1 in absence of cytosolic calcium inhibits the G protein-coupled receptor activity; interaction and inhibition is relieved when cytosolic calcium increases. Activated by AP503, a small molecule that activates ADGRD1 without activating androgen nuclear receptors: AP503 enhances muscle strength without eliciting androgenic adverse effects. Activated by the 8E3E8 antibody that targets the N-terminus. Functionally, adhesion G-protein coupled receptor (aGPCR) for androgen hormone 5alpha-dihydrotestosterone (5alpha-DHT), also named 17beta-hydroxy-5alpha-androstan-3-one, the most potent hormone among androgens. Also activated by methenolone drug. Ligand binding causes a conformation change that triggers signaling via guanine nucleotide-binding proteins (G proteins) and modulates the activity of downstream effectors, such as adenylate cyclase. ADGRD1 is coupled to G(s) G proteins and mediates activation of adenylate cyclase activity. Acts as a 5alpha-DHT receptor in muscle cells, thereby increasing intracellular cyclic AMP (cAMP) levels and enhancing muscle strength. This chain is Adhesion G-protein coupled receptor D1, found in Homo sapiens (Human).